The primary structure comprises 307 residues: MPVTQGSGALPARRIVFVHAHPDDETIATGATMACYAADPDTQVVLVTCTLGEMGEVLVPELTNLRADRADQLGGYRIGELEQACTELGVTDYRFLGGAGRWRDSGMLDSPANDDPRCFWRANMDDASEALVRIVREVRPQVIVTYDAIGDYGHPDHIRAHDVTVRAFADAADPDFAPDAGPTWQVSKLYETALSHSAVESAVDRIWRSDLAKTVPEGITMPSDMLLSVPDTKVTTTIEAPGFFAAKIAAMRAHRSQMTVDGFFFALVDGNGRSAKATENFVLARGAVGPGSGSGVETDLFDGVATR.

Zn(2+) is bound by residues H21, D24, and H157.

This sequence belongs to the MshB deacetylase family. The cofactor is Zn(2+).

It carries out the reaction 1D-myo-inositol 2-acetamido-2-deoxy-alpha-D-glucopyranoside + H2O = 1D-myo-inositol 2-amino-2-deoxy-alpha-D-glucopyranoside + acetate. Its function is as follows. Catalyzes the deacetylation of 1D-myo-inositol 2-acetamido-2-deoxy-alpha-D-glucopyranoside (GlcNAc-Ins) in the mycothiol biosynthesis pathway. This Frankia casuarinae (strain DSM 45818 / CECT 9043 / HFP020203 / CcI3) protein is 1D-myo-inositol 2-acetamido-2-deoxy-alpha-D-glucopyranoside deacetylase 1.